Here is a 202-residue protein sequence, read N- to C-terminus: ATP-dependent Clp protease proteolytic subunit (202 aa).

The active-site Nucleophile is Ser-101. His-126 is a catalytic residue.

Belongs to the peptidase S14 family. Component of the chloroplastic Clp protease core complex.

Its subcellular location is the plastid. It is found in the chloroplast stroma. The catalysed reaction is Hydrolysis of proteins to small peptides in the presence of ATP and magnesium. alpha-casein is the usual test substrate. In the absence of ATP, only oligopeptides shorter than five residues are hydrolyzed (such as succinyl-Leu-Tyr-|-NHMec, and Leu-Tyr-Leu-|-Tyr-Trp, in which cleavage of the -Tyr-|-Leu- and -Tyr-|-Trp bonds also occurs).. In terms of biological role, cleaves peptides in various proteins in a process that requires ATP hydrolysis. Has a chymotrypsin-like activity. Plays a major role in the degradation of misfolded proteins. This chain is ATP-dependent Clp protease proteolytic subunit, found in Buxus microphylla (Littleleaf boxwood).